The primary structure comprises 260 residues: Thrombin-like enzyme 2 (260 aa).

A signal peptide spans 1 to 18 (MMLIRVLANLLILQLSYA). Residues 19–24 (QKSSEL) constitute a propeptide that is removed on maturation. One can recognise a Peptidase S1 domain in the interval 25 to 251 (VIGGDECNIN…HLDWIQSIIA (227 aa)). 6 disulfides stabilise this stretch: C31/C165, C52/C68, C102/C258, C144/C212, C176/C191, and C202/C227. The active-site Charge relay system is the H67. Residue N105 is glycosylated (N-linked (GlcNAc...) asparagine). D112 (charge relay system) is an active-site residue. N-linked (GlcNAc...) asparagine glycans are attached at residues N156 and N172. The Charge relay system role is filled by S206. N-linked (GlcNAc...) asparagine glycosylation occurs at N253.

This sequence belongs to the peptidase S1 family. Snake venom subfamily. Monomer. Expressed by the venom gland.

It is found in the secreted. Its function is as follows. Thrombin-like snake venom serine protease. This is Thrombin-like enzyme 2 from Trimeresurus albolabris (White-lipped pit viper).